A 179-amino-acid polypeptide reads, in one-letter code: Replicase large subunit (179 aa).

This sequence belongs to the ssRNA positive-strand viruses RNA-directed RNA polymerase family.

It carries out the reaction RNA(n) + a ribonucleoside 5'-triphosphate = RNA(n+1) + diphosphate. The enzyme catalyses ATP + H2O = ADP + phosphate + H(+). Functionally, replicase large subunit: is an RNA-dependent RNA polymerase active in viral RNA replication. The sequence is that of Replicase large subunit from Tobacco rattle virus (strain PSG).